The primary structure comprises 546 residues: Chaperonin GroEL (546 aa).

Residues 30-33, K51, 87-91, G415, 479-481, and D495 each bind ATP; these read TLGP, DGTTT, and NAA. The tract at residues 526–546 is disordered; sequence KEDAPMPGGMPGGMGGMGMDM. Positions 534 to 546 are enriched in gly residues; it reads GMPGGMGGMGMDM.

The protein belongs to the chaperonin (HSP60) family. Forms a cylinder of 14 subunits composed of two heptameric rings stacked back-to-back. Interacts with the co-chaperonin GroES.

Its subcellular location is the cytoplasm. It carries out the reaction ATP + H2O + a folded polypeptide = ADP + phosphate + an unfolded polypeptide.. Functionally, together with its co-chaperonin GroES, plays an essential role in assisting protein folding. The GroEL-GroES system forms a nano-cage that allows encapsulation of the non-native substrate proteins and provides a physical environment optimized to promote and accelerate protein folding. This chain is Chaperonin GroEL, found in Burkholderia thailandensis.